A 269-amino-acid chain; its full sequence is Phosphonoacetaldehyde hydrolase (269 aa).

Asp-10 acts as the Nucleophile in catalysis. Residues Asp-10 and Ala-12 each contribute to the Mg(2+) site. Lys-52 functions as the Schiff-base intermediate with substrate in the catalytic mechanism. Asp-186 provides a ligand contact to Mg(2+).

Belongs to the HAD-like hydrolase superfamily. PhnX family. In terms of assembly, homodimer. The cofactor is Mg(2+).

The enzyme catalyses phosphonoacetaldehyde + H2O = acetaldehyde + phosphate + H(+). Involved in phosphonate degradation. The chain is Phosphonoacetaldehyde hydrolase from Salmonella typhi.